The chain runs to 190 residues: Elongation factor P (190 aa).

The protein belongs to the elongation factor P family.

The protein resides in the cytoplasm. Its pathway is protein biosynthesis; polypeptide chain elongation. In terms of biological role, involved in peptide bond synthesis. Stimulates efficient translation and peptide-bond synthesis on native or reconstituted 70S ribosomes in vitro. Probably functions indirectly by altering the affinity of the ribosome for aminoacyl-tRNA, thus increasing their reactivity as acceptors for peptidyl transferase. The sequence is that of Elongation factor P (efp) from Mycoplasma pneumoniae (strain ATCC 29342 / M129 / Subtype 1) (Mycoplasmoides pneumoniae).